The following is a 355-amino-acid chain: Zinc transporter ZIP13 homolog (355 aa).

N-linked (GlcNAc...) asparagine glycosylation occurs at asparagine 4. 3 helical membrane passes run 37 to 57 (VFSL…LIII), 79 to 99 (VLLS…LLPE), and 118 to 138 (LWVL…SGYA). A glycan (N-linked (GlcNAc...) asparagine) is linked at asparagine 218. A run of 2 helical transmembrane segments spans residues 273–293 (LLTA…SGVT) and 301–321 (SWIM…TVLP).

It belongs to the ZIP transporter (TC 2.A.5) family. KE4/Catsup subfamily.

Its subcellular location is the basolateral cell membrane. The protein localises to the golgi apparatus membrane. Its function is as follows. Involved in zinc transport and homeostasis. The sequence is that of Zinc transporter ZIP13 homolog (Zip99C) from Drosophila melanogaster (Fruit fly).